A 199-amino-acid polypeptide reads, in one-letter code: NADH-quinone oxidoreductase subunit C (199 aa).

This sequence belongs to the complex I 30 kDa subunit family. NDH-1 is composed of 14 different subunits. Subunits NuoB, C, D, E, F, and G constitute the peripheral sector of the complex.

It is found in the cell membrane. It carries out the reaction a quinone + NADH + 5 H(+)(in) = a quinol + NAD(+) + 4 H(+)(out). In terms of biological role, NDH-1 shuttles electrons from NADH, via FMN and iron-sulfur (Fe-S) centers, to quinones in the respiratory chain. The immediate electron acceptor for the enzyme in this species is believed to be ubiquinone. Couples the redox reaction to proton translocation (for every two electrons transferred, four hydrogen ions are translocated across the cytoplasmic membrane), and thus conserves the redox energy in a proton gradient. The protein is NADH-quinone oxidoreductase subunit C of Polynucleobacter asymbioticus (strain DSM 18221 / CIP 109841 / QLW-P1DMWA-1) (Polynucleobacter necessarius subsp. asymbioticus).